Here is a 90-residue protein sequence, read N- to C-terminus: Small ribosomal subunit protein bS20 (90 aa).

Residues 1 to 10 are compositionally biased toward polar residues; it reads MANHKSTQKS. A disordered region spans residues 1–25; the sequence is MANHKSTQKSIRQDQKRNLINKSRK.

Belongs to the bacterial ribosomal protein bS20 family.

Its function is as follows. Binds directly to 16S ribosomal RNA. This chain is Small ribosomal subunit protein bS20, found in Orientia tsutsugamushi (strain Boryong) (Rickettsia tsutsugamushi).